A 952-amino-acid chain; its full sequence is Leucine--tRNA ligase (952 aa).

Residues 66 to 77 (PYPSGAGLHVGH) carry the 'HIGH' region motif. The short motif at 722–726 (KMGKS) is the 'KMSKS' region element. Lysine 725 is an ATP binding site.

Belongs to the class-I aminoacyl-tRNA synthetase family.

The protein localises to the cytoplasm. The enzyme catalyses tRNA(Leu) + L-leucine + ATP = L-leucyl-tRNA(Leu) + AMP + diphosphate. The chain is Leucine--tRNA ligase from Corynebacterium glutamicum (strain ATCC 13032 / DSM 20300 / JCM 1318 / BCRC 11384 / CCUG 27702 / LMG 3730 / NBRC 12168 / NCIMB 10025 / NRRL B-2784 / 534).